A 218-amino-acid chain; its full sequence is Superoxide dismutase [Mn] 1 (218 aa).

His43, His98, Asp180, and His184 together coordinate Mn(2+).

Belongs to the iron/manganese superoxide dismutase family. In terms of assembly, homodimer. Requires Mn(2+) as cofactor.

It catalyses the reaction 2 superoxide + 2 H(+) = H2O2 + O2. In terms of biological role, destroys superoxide anion radicals which are normally produced within the cells and which are toxic to biological systems. The sequence is that of Superoxide dismutase [Mn] 1 (sodA1) from Bacillus cereus (strain ATCC 14579 / DSM 31 / CCUG 7414 / JCM 2152 / NBRC 15305 / NCIMB 9373 / NCTC 2599 / NRRL B-3711).